A 96-amino-acid chain; its full sequence is Co-chaperonin GroES (96 aa).

Belongs to the GroES chaperonin family. As to quaternary structure, heptamer of 7 subunits arranged in a ring. Interacts with the chaperonin GroEL.

The protein resides in the cytoplasm. Its function is as follows. Together with the chaperonin GroEL, plays an essential role in assisting protein folding. The GroEL-GroES system forms a nano-cage that allows encapsulation of the non-native substrate proteins and provides a physical environment optimized to promote and accelerate protein folding. GroES binds to the apical surface of the GroEL ring, thereby capping the opening of the GroEL channel. The protein is Co-chaperonin GroES of Pelagibacter ubique (strain HTCC1062).